A 943-amino-acid chain; its full sequence is Aconitate hydratase A (943 aa).

3 residues coordinate [4Fe-4S] cluster: Cys479, Cys545, and Cys548.

This sequence belongs to the aconitase/IPM isomerase family. As to quaternary structure, monomer. The cofactor is [4Fe-4S] cluster.

It catalyses the reaction citrate = D-threo-isocitrate. The enzyme catalyses (2S,3R)-3-hydroxybutane-1,2,3-tricarboxylate = 2-methyl-cis-aconitate + H2O. It functions in the pathway carbohydrate metabolism; tricarboxylic acid cycle; isocitrate from oxaloacetate: step 2/2. The protein operates within organic acid metabolism; propanoate degradation. Involved in the catabolism of short chain fatty acids (SCFA) via the tricarboxylic acid (TCA)(acetyl degradation route) and probably via the 2-methylcitrate cycle I (propionate degradation route). Catalyzes the reversible isomerization of citrate to isocitrate via cis-aconitate. The apo form of AcnA functions as a RNA-binding regulatory protein which binds to selected IRE-like sequences present within the UTRs (untranslated regions) of 3' trxC and 5' IdeR mRNA. Could catalyze the hydration of 2-methyl-cis-aconitate to yield (2R,3S)-2-methylisocitrate. The protein is Aconitate hydratase A (acn) of Mycobacterium tuberculosis (strain ATCC 25618 / H37Rv).